Reading from the N-terminus, the 71-residue chain is Large ribosomal subunit protein bL31 (71 aa).

The Zn(2+) site is built by C16, C18, C37, and C40.

Belongs to the bacterial ribosomal protein bL31 family. Type A subfamily. In terms of assembly, part of the 50S ribosomal subunit. It depends on Zn(2+) as a cofactor.

Functionally, binds the 23S rRNA. The protein is Large ribosomal subunit protein bL31 of Aeromonas salmonicida (strain A449).